Reading from the N-terminus, the 319-residue chain is Acetyl-coenzyme A carboxylase carboxyl transferase subunit alpha (319 aa).

In terms of domain architecture, CoA carboxyltransferase C-terminal spans 38 to 293 (HALQDKLRMR…KAVLLNELDA (256 aa)).

It belongs to the AccA family. Acetyl-CoA carboxylase is a heterohexamer composed of biotin carboxyl carrier protein (AccB), biotin carboxylase (AccC) and two subunits each of ACCase subunit alpha (AccA) and ACCase subunit beta (AccD).

Its subcellular location is the cytoplasm. The catalysed reaction is N(6)-carboxybiotinyl-L-lysyl-[protein] + acetyl-CoA = N(6)-biotinyl-L-lysyl-[protein] + malonyl-CoA. Its pathway is lipid metabolism; malonyl-CoA biosynthesis; malonyl-CoA from acetyl-CoA: step 1/1. Its function is as follows. Component of the acetyl coenzyme A carboxylase (ACC) complex. First, biotin carboxylase catalyzes the carboxylation of biotin on its carrier protein (BCCP) and then the CO(2) group is transferred by the carboxyltransferase to acetyl-CoA to form malonyl-CoA. The protein is Acetyl-coenzyme A carboxylase carboxyl transferase subunit alpha of Stenotrophomonas maltophilia (strain K279a).